A 131-amino-acid chain; its full sequence is MSIFIFISLVLGLAHQHKRSSIIVRLYSKDGFQKCSLTIRAVSAYALACKLQLEHRPLRAQRLRQIRLAQKSRVFPFIFYQCPHKKKSARIHALTFTKEAELSKLSIETLRCIHLQLISCTRSPVVTNSSY.

Positions 1–16 are cleaved as a signal peptide; that stretch reads MSIFIFISLVLGLAHQ. A RxLR motif is present at residues 56–59; sequence RPLR. N-linked (GlcNAc...) asparagine glycosylation occurs at Asn-128.

The protein belongs to the RxLR effector family.

The protein localises to the secreted. It localises to the host nucleus. In terms of biological role, secreted effector that completely suppresses the host cell death induced by cell death-inducing proteins. In Plasmopara viticola (Downy mildew of grapevine), this protein is Secreted RxLR effector protein 45.